The primary structure comprises 343 residues: Flap endonuclease 1 (343 aa).

The tract at residues 1–98 (MGVPIGDLVP…KELEKRREAR (98 aa)) is N-domain. Residues Asp27, Asp80, Glu152, Glu154, Asp173, Asp175, and Asp236 each coordinate Mg(2+). Residues 116–258 (EARKYAQRAT…KALEIVRYSR (143 aa)) form an I-domain region. An interaction with PCNA region spans residues 330–338 (RQSTLESWF).

This sequence belongs to the XPG/RAD2 endonuclease family. FEN1 subfamily. In terms of assembly, interacts with PCNA. PCNA stimulates the nuclease activity without altering cleavage specificity. Mg(2+) serves as cofactor.

In terms of biological role, structure-specific nuclease with 5'-flap endonuclease and 5'-3' exonuclease activities involved in DNA replication and repair. During DNA replication, cleaves the 5'-overhanging flap structure that is generated by displacement synthesis when DNA polymerase encounters the 5'-end of a downstream Okazaki fragment. Binds the unpaired 3'-DNA end and kinks the DNA to facilitate 5' cleavage specificity. Cleaves one nucleotide into the double-stranded DNA from the junction in flap DNA, leaving a nick for ligation. Also involved in the base excision repair (BER) pathway. Acts as a genome stabilization factor that prevents flaps from equilibrating into structures that lead to duplications and deletions. Also possesses 5'-3' exonuclease activity on nicked or gapped double-stranded DNA. The polypeptide is Flap endonuclease 1 (Pyrococcus horikoshii (strain ATCC 700860 / DSM 12428 / JCM 9974 / NBRC 100139 / OT-3)).